Consider the following 695-residue polypeptide: Elongation factor G (695 aa).

Residues 5-280 (SHYRNIGIFA…AVIDFLPSPT (276 aa)) enclose the tr-type G domain. Residues 14–21 (AHVDAGKT), 78–82 (DTPGH), and 132–135 (NKLD) contribute to the GTP site. A disordered region spans residues 279-299 (PTEVDPQPLTDEETGEPTGEV).

This sequence belongs to the TRAFAC class translation factor GTPase superfamily. Classic translation factor GTPase family. EF-G/EF-2 subfamily.

The protein localises to the cytoplasm. Functionally, catalyzes the GTP-dependent ribosomal translocation step during translation elongation. During this step, the ribosome changes from the pre-translocational (PRE) to the post-translocational (POST) state as the newly formed A-site-bound peptidyl-tRNA and P-site-bound deacylated tRNA move to the P and E sites, respectively. Catalyzes the coordinated movement of the two tRNA molecules, the mRNA and conformational changes in the ribosome. This Alteromonas mediterranea (strain DSM 17117 / CIP 110805 / LMG 28347 / Deep ecotype) protein is Elongation factor G.